The following is a 329-amino-acid chain: UDP-N-acetylenolpyruvoylglucosamine reductase (329 aa).

One can recognise an FAD-binding PCMH-type domain in the interval 28–192 (RVGGPADLLC…ARVEVRLHPG (165 aa)). Residue arginine 172 is part of the active site. The active-site Proton donor is serine 221. The active site involves glutamate 291. The interval 307 to 329 (DGHAAAGGGPGAASGGVRPPEAT) is disordered. The span at 311–320 (AAGGGPGAAS) shows a compositional bias: gly residues.

Belongs to the MurB family. The cofactor is FAD.

It is found in the cytoplasm. The enzyme catalyses UDP-N-acetyl-alpha-D-muramate + NADP(+) = UDP-N-acetyl-3-O-(1-carboxyvinyl)-alpha-D-glucosamine + NADPH + H(+). It participates in cell wall biogenesis; peptidoglycan biosynthesis. In terms of biological role, cell wall formation. This is UDP-N-acetylenolpyruvoylglucosamine reductase from Anaeromyxobacter dehalogenans (strain 2CP-1 / ATCC BAA-258).